Reading from the N-terminus, the 300-residue chain is F-box protein PP2-A15 (300 aa).

The region spanning 17-63 is the F-box domain; that stretch reads MGPGLGDIPESCVACVFMYLTPPEICNLAGLNRSFRGAASSDSVWEK.

This chain is F-box protein PP2-A15 (PP2A15), found in Arabidopsis thaliana (Mouse-ear cress).